The sequence spans 406 residues: Bifunctional enzyme IspD/IspF (406 aa).

The segment at 1 to 247 is 2-C-methyl-D-erythritol 4-phosphate cytidylyltransferase; sequence MSLIRVNGEA…ALFFNPAKDT (247 aa). Residues 248–406 form a 2-C-methyl-D-erythritol 2,4-cyclodiphosphate synthase region; the sequence is FIGMGFDTHA…HVSMRYKQKL (159 aa). Residues aspartate 254 and histidine 256 each contribute to the a divalent metal cation site. 4-CDP-2-C-methyl-D-erythritol 2-phosphate is bound by residues 254 to 256 and 280 to 281; these read DTH and HS. A divalent metal cation is bound at residue histidine 288. Residues 302-304, 307-311, 378-381, phenylalanine 385, and lysine 388 contribute to the 4-CDP-2-C-methyl-D-erythritol 2-phosphate site; these read DIG, FPDND, and TTME.

It in the N-terminal section; belongs to the IspD/TarI cytidylyltransferase family. IspD subfamily. This sequence in the C-terminal section; belongs to the IspF family. Requires a divalent metal cation as cofactor.

The catalysed reaction is 2-C-methyl-D-erythritol 4-phosphate + CTP + H(+) = 4-CDP-2-C-methyl-D-erythritol + diphosphate. It carries out the reaction 4-CDP-2-C-methyl-D-erythritol 2-phosphate = 2-C-methyl-D-erythritol 2,4-cyclic diphosphate + CMP. The protein operates within isoprenoid biosynthesis; isopentenyl diphosphate biosynthesis via DXP pathway; isopentenyl diphosphate from 1-deoxy-D-xylulose 5-phosphate: step 2/6. Its pathway is isoprenoid biosynthesis; isopentenyl diphosphate biosynthesis via DXP pathway; isopentenyl diphosphate from 1-deoxy-D-xylulose 5-phosphate: step 4/6. In terms of biological role, bifunctional enzyme that catalyzes the formation of 4-diphosphocytidyl-2-C-methyl-D-erythritol from CTP and 2-C-methyl-D-erythritol 4-phosphate (MEP) (IspD), and catalyzes the conversion of 4-diphosphocytidyl-2-C-methyl-D-erythritol 2-phosphate (CDP-ME2P) to 2-C-methyl-D-erythritol 2,4-cyclodiphosphate (ME-CPP) with a corresponding release of cytidine 5-monophosphate (CMP) (IspF). The chain is Bifunctional enzyme IspD/IspF from Helicobacter pylori (strain Shi470).